Consider the following 187-residue polypeptide: Elongation factor P (187 aa).

Belongs to the elongation factor P family.

The protein localises to the cytoplasm. The protein operates within protein biosynthesis; polypeptide chain elongation. Involved in peptide bond synthesis. Stimulates efficient translation and peptide-bond synthesis on native or reconstituted 70S ribosomes in vitro. Probably functions indirectly by altering the affinity of the ribosome for aminoacyl-tRNA, thus increasing their reactivity as acceptors for peptidyl transferase. This chain is Elongation factor P, found in Corynebacterium urealyticum (strain ATCC 43042 / DSM 7109).